A 285-amino-acid chain; its full sequence is Iodotyrosine deiodinase 1 (285 aa).

Residues 1 to 21 form a helical membrane-spanning segment; that stretch reads MFLLTPVLVAVVCILVIWVFK. FMN contacts are provided by residues 96 to 100 and 124 to 125; these read RRSIR and SG. A126, E153, Y157, and K178 together coordinate 3,5-diiodo-L-tyrosine. The 3-iodo-L-tyrosine site is built by A126, E153, Y157, and K178. FMN-binding positions include 233 to 235 and R275; that span reads TTT.

Belongs to the nitroreductase family. As to quaternary structure, homodimer. Requires FMN as cofactor.

The protein localises to the cell membrane. It is found in the cytoplasmic vesicle membrane. The enzyme catalyses 2 iodide + L-tyrosine + 2 NADP(+) = 3,5-diiodo-L-tyrosine + 2 NADPH + H(+). The catalysed reaction is iodide + L-tyrosine + NADP(+) = 3-iodo-L-tyrosine + NADPH. It carries out the reaction 3-iodo-L-tyrosine + iodide + NADP(+) = 3,5-diiodo-L-tyrosine + NADPH + H(+). It catalyses the reaction L-tyrosine + chloride + NADP(+) = 3-chloro-L-tyrosine + NADPH. The enzyme catalyses bromide + L-tyrosine + NADP(+) = 3-bromo-L-tyrosine + NADPH. In terms of biological role, catalyzes the dehalogenation of halotyrosines such as 3-bromo-L-tyrosine, 3-chloro-L-tyrosine, 3-iodo-L-tyrosine and 3,5-diiodo-L-tyrosine. During thyroid hormone biosynthesis, facilitates iodide salvage by catalysing the oxidative NADPH-dependent deiodination of the halogenated by-products of thyroid hormone production, monoiodotyrosine (L-MIT) and diiodotyrosine (L-DIT). The scavanged iodide can then reenter the hormone-producing pathways. Acts more efficiently on 3-iodo-L-tyrosine than 3,5-diiodo-L-tyrosine. The protein is Iodotyrosine deiodinase 1 (Iyd) of Rattus norvegicus (Rat).